The following is a 503-amino-acid chain: Galactose/methyl galactoside import ATP-binding protein MglA 2 (503 aa).

2 ABC transporter domains span residues 11 to 246 and 257 to 503; these read LEMT…VGRE and TPKE…SRYL. Position 43–50 (43–50) interacts with ATP; it reads GENGAGKS.

It belongs to the ABC transporter superfamily. Galactose/methyl galactoside importer (TC 3.A.1.2.3) family. In terms of assembly, the complex is composed of one ATP-binding protein (MglA), two transmembrane proteins (MglC) and a solute-binding protein (MglB).

It localises to the cell inner membrane. It carries out the reaction D-galactose(out) + ATP + H2O = D-galactose(in) + ADP + phosphate + H(+). It catalyses the reaction methyl beta-D-galactoside(out) + ATP + H2O = methyl beta-D-galactoside(in) + ADP + phosphate + H(+). Functionally, part of the ABC transporter complex MglABC involved in galactose/methyl galactoside import. Responsible for energy coupling to the transport system. The protein is Galactose/methyl galactoside import ATP-binding protein MglA 2 of Photobacterium profundum (strain SS9).